We begin with the raw amino-acid sequence, 538 residues long: Efflux pump radE (538 aa).

3 stretches are compositionally biased toward basic and acidic residues: residues 1 to 12, 20 to 35, and 65 to 74; these read MATSRDFGREPP, EAGHTLHDGCQHVSEH, and DPKEEERDPN. Disordered stretches follow at residues 1–35 and 65–90; these read MATSRDFGREPPRQQQDSDEAGHTLHDGCQHVSEH and DPKEEERDPNIVDWDGPDDPANPQNW. A run of 12 helical transmembrane segments spans residues 100 to 120, 134 to 154, 163 to 183, 194 to 214, 225 to 245, 253 to 273, 327 to 347, 362 to 382, 409 to 429, 436 to 456, 482 to 502, and 505 to 525; these read AVLSIITFMVPLASSMFAPGI, LATFVVSVYILGLAAGPLVLA, VVIYHVGNVLFIIFTVACALS, FLCGLVGAGPIAIGGGTIADL, SVWSLGPLLGPSVGPVAGGFL, WIFWVLAITAGVITIAGLLVL, PICLVLSVYSAFVYAMIYFMI, EGIVGLVYIALGLGMLFGVVV, IPPTLLAGFLIPTGLFIYGWT, WAVPLLGALLAGMGICIINIS, IFGATFPLFALQMYETLGLGW, and SLLAFIAVAMFAIPPLLFYYG.

This sequence belongs to the major facilitator superfamily.

It is found in the cell membrane. Its function is as follows. Efflux pump that might be required for efficient secretion of radicicol or other secondary metabolies produced by the radicicol gene cluster. The chain is Efflux pump radE from Floropilus chiversii (Chaetomium chiversii).